Consider the following 367-residue polypeptide: THO complex subunit 6 (367 aa).

WD repeat units follow at residues 23 to 67 (IETR…SQSA), 88 to 129 (AHEG…ESDV), 157 to 196 (SPMPEINAMSVDPQSGSVFTAAGDSCAYCWDVESGKIKMT), 199 to 240 (GHSD…KVIG), 243 to 283 (DKKS…CVQT), 285 to 322 (PIPAHVQDVMFDEKQILTVGAEPLLRRFDLNGALLSQI), and 324 to 363 (CAPCSVFSISLHPAGVVAVGGYGGIVDVISQFGSHLCTFR).

Belongs to the WD repeat THOC6 family. As to quaternary structure, component of the THO complex, which is composed of THO1, THO2, THO3, THO5, THO6 and THO7. Interacts with ABI5, DDB1A and DWA2.

The protein localises to the nucleus. Its pathway is protein modification; protein ubiquitination. Its function is as follows. Acts as a component of the THO subcomplex of the TREX complex which is thought to couple mRNA transcription, processing and nuclear export. Functionally, component of the CUL4-RBX1-DDB1-DWA1/DWA2 E3 ubiquitin-protein ligase complex that acts as a negative regulator in abscisic acid (ABA) signaling. May function as the substrate recognition module within this complex leading to ABI5 degradation. Functionally redundant with DWA2. This is THO complex subunit 6 (THO6) from Arabidopsis thaliana (Mouse-ear cress).